We begin with the raw amino-acid sequence, 213 residues long: Uridine kinase (213 aa).

15–22 (GASASGKS) contributes to the ATP binding site.

It belongs to the uridine kinase family.

It localises to the cytoplasm. It catalyses the reaction uridine + ATP = UMP + ADP + H(+). It carries out the reaction cytidine + ATP = CMP + ADP + H(+). The protein operates within pyrimidine metabolism; CTP biosynthesis via salvage pathway; CTP from cytidine: step 1/3. Its pathway is pyrimidine metabolism; UMP biosynthesis via salvage pathway; UMP from uridine: step 1/1. The protein is Uridine kinase of Yersinia pseudotuberculosis serotype O:1b (strain IP 31758).